Consider the following 1452-residue polypeptide: MEQGMDYWLGQIQQKDVGKRLQVGPDLMEYLSDRQKSIDLEQDQTVLDRMVDGLATSWVNSSNYKVALLGMDILSALVTRLQDRFRSQIGTVLPSLMDRLGDAKDSVREQDQNLLIKIMEQASNPQYVWERMFSGFKHKNFRTREGVCLCLIATLNVYGAHSLTLSKIVPHICNLLGDPNSQVRDAAINCLVEIYRHVGERVRADLSKKGLPQSRLNVIFTKFDEVQKSGTMILSSADKNFDDEDSVDGNRPSSASSSASSKAPQAARRGVSLGTARRPGTSSAAPKPGGTAKEGAGGVDEEDFIRGFEDVPTVQIYSSRDLEESLNKIREILSDDKHDWEQRISALKKIRSLLLAGAAEYDTFFPQLRLLDGAFKLSAKDLRSQVVREACITLGHLSSVLGNKFDHGAEAIMPTVFNLVPNSAKIMATSGVVAIRLIIRQTHVPRLIPIITSNCTSKSVAVRRRCYEFLDLLLQEWQTHSLERHVSVLAETIKKGIHDADSEARIVARKCYWGFHSHFSKEAEQLFHTLESSYQKALQSHLKNSDSIVSLPQSDRSSSSSQESLNRPLSAKRSPTGSTVSRASTATSKSTPGSLQRSRSDIDVNAATCAKSKATSGASAAPFSSVAALPPGSYASLGRIRTRRQSSGSTTSTASTPADTRGRSRAKVVSQSQPGSRSSSPGKLLGSGYGGIASGPQRVPQMPSSEKRSKIPRSQGCSRETSPSRIGLDRFGISQPGRIPSAMRVLSSSTDLEAAVADALKKPVRRRYEPYGMYSDDDANSDASSACSERSYSSKNGGIPHYLRQTEDVAEVLNHCASSNWSERKEGLIGLQNLLKSQRTLSRVELKRLCEIFTRMFADPHSKRVFSMFLETLVDFVIIHKDDLQDWLFILLTQLLKKMGADLLGSVQAKVQKALDVTRDSFPFDQQFNILMRFIVDQTQTPNLKVKVAILKYIESLARQMDPTDFVNSSETRLAVSRIITWTTEPKSSDVRKAAQVVLISLFELNTPEFTMLLGALPKTFQDGATKLLHNHLKNSSNSSMGSPSNTIGRTPSRHSSSRASPLTSPTNCSHGGLSPSMLDYDTENLNSDEIYSSLRGVTEAIEKFSFRSQVDLNEPVRREGKKESELGSCDVGIASPASDLRGGTDMVEGGRMALDNKTSLLNTQPPRAFTGPRGREYNPYAYSDSINSYDKTALKEAVFDDDMDQLRDVPIDHSDLVADLLKELSNHNERVEERKGALCELLKITREDSLAVWEEHFKTILLLLLETLGDKDHAIRALALRVLREILRNQPARFKNYAELTIMKTLEAHKDSHKEVVRAAEEAASTLAGSIHPEQCIKVLCPIIQTADYPINLAAIKMQTKVIERISKESLHQILPDIIPGLLQGYDNTESSVRKASVFCLVAIYSVIGEELKPYLAQLTGGKMKLLNLYIKRAQTTNSNSSSSSDVSTHS.

3 HEAT repeats span residues 68-87 (LLGMDILSALVTRLQDRFRS), 88-124 (QIGTVLPSLMDRLGDAKDSVREQDQNLLIKIMEQASN), and 163-200 (LTLSKIVPHICNLLGDPNSQVRDAAINCLVEIYRHVGE). The disordered stretch occupies residues 239-299 (KNFDDEDSVD…GTAKEGAGGV (61 aa)). The span at 253 to 267 (SSASSSASSKAPQAA) shows a compositional bias: low complexity. HEAT repeat units follow at residues 407–442 (HGAEAIMPTVFNLVPNSAKIMATSGVVAIRLIIRQT) and 443–479 (HVPRLIPIITSNCTSKSVAVRRRCYEFLDLLLQEWQT). 2 disordered regions span residues 545 to 735 (SDSI…GISQ) and 771 to 792 (YGMYSDDDANSDASSACSERSY). Positions 550–569 (SLPQSDRSSSSSQESLNRPL) are enriched in low complexity. Residues 573 to 597 (RSPTGSTVSRASTATSKSTPGSLQR) show a composition bias toward polar residues. Low complexity-rich tracts occupy residues 606–621 (AATCAKSKATSGASAA), 645–659 (QSSGSTTSTASTPAD), and 668–682 (VVSQSQPGSRSSSPG). The span at 715-724 (QGCSRETSPS) shows a compositional bias: polar residues. Residues 781–792 (SDASSACSERSY) are compositionally biased toward low complexity. An HEAT 6 repeat occupies 926 to 963 (QQFNILMRFIVDQTQTPNLKVKVAILKYIESLARQMDP). Residues 1033 to 1076 (LKNSSNSSMGSPSNTIGRTPSRHSSSRASPLTSPTNCSHGGLSP) form a disordered region. Residues 1034–1046 (KNSSNSSMGSPSN) are compositionally biased toward low complexity. A compositionally biased stretch (polar residues) spans 1058-1070 (SRASPLTSPTNCS). 2 HEAT repeats span residues 1256 to 1293 (EHFKTILLLLLETLGDKDHAIRALALRVLREILRNQPA) and 1374 to 1411 (QILPDIIPGLLQGYDNTESSVRKASVFCLVAIYSVIGE).

The protein belongs to the CLASP family. In terms of assembly, interacts (via C-terminus) with clip1/clip-170, and cenpe.

The protein localises to the cytoplasm. The protein resides in the cytoskeleton. Its subcellular location is the microtubule organizing center. It is found in the centrosome. It localises to the chromosome. The protein localises to the centromere. The protein resides in the kinetochore. Its subcellular location is the spindle. It is found in the golgi apparatus. It localises to the trans-Golgi network. Its function is as follows. Microtubule plus-end tracking protein that promotes the stabilization of dynamic microtubules during anaphase. Plays a crucial role in chromatin-induced microtubule formation. May also act at microtubule minus ends. May be involved in the nucleation of noncentrosomal microtubules originating from the trans-Golgi network (TGN). The polypeptide is CLIP-associating protein 1 (Xenopus tropicalis (Western clawed frog)).